The chain runs to 233 residues: Putative N-acetylmannosamine-6-phosphate 2-epimerase (233 aa).

This sequence belongs to the NanE family.

It carries out the reaction an N-acyl-D-glucosamine 6-phosphate = an N-acyl-D-mannosamine 6-phosphate. It functions in the pathway amino-sugar metabolism; N-acetylneuraminate degradation; D-fructose 6-phosphate from N-acetylneuraminate: step 3/5. Converts N-acetylmannosamine-6-phosphate (ManNAc-6-P) to N-acetylglucosamine-6-phosphate (GlcNAc-6-P). This is Putative N-acetylmannosamine-6-phosphate 2-epimerase from Yersinia pestis bv. Antiqua (strain Antiqua).